Consider the following 211-residue polypeptide: Claudin-1 (211 aa).

Residues 1-7 are Cytoplasmic-facing; the sequence is MANAGLQ. Residues 8–28 traverse the membrane as a helical segment; the sequence is LLGFILASLGWIGSIVSTALP. Over 29-81 the chain is Extracellular; the sequence is QWKIYSYAGDNIVTAQAIYEGLWMSCVSQSTGQIQCKVFDSLLNLNSTLQATR. Cysteines 54 and 64 form a disulfide. Residues 82-102 traverse the membrane as a helical segment; the sequence is ALMVIGILLGLIAIFVSTIGM. Over 103–115 the chain is Cytoplasmic; sequence KCMRCLEDDEVQK. A helical transmembrane segment spans residues 116–136; the sequence is MWMAVIGGIIFLISGLATLVA. The Extracellular portion of the chain corresponds to 137 to 163; that stretch reads TAWYGNRIVQEFYDPLTPINARYEFGQ. A helical transmembrane segment spans residues 164–184; the sequence is ALFTGWAAASLCLLGGVLLSC. The Cytoplasmic segment spans residues 185 to 211; the sequence is SCPRKTTSYPTPRPYPKPTPSSGKDYV. Residues 190–211 are disordered; sequence TTSYPTPRPYPKPTPSSGKDYV. The tract at residues 210-211 is interactions with TJP1, TJP2, TJP3 and PATJ; it reads YV.

It belongs to the claudin family. Can form homo- and heteropolymers with other CLDN. Homopolymers interact with CLDN3, but not CLDN2, homopolymers. Directly interacts with TJP1/ZO-1, TJP2/ZO-2 and TJP3/ZO-3. Interacts with MPDZ and PATJ. Interacts with OCLN, CD81, CLDN4, CLDN6 and CLDN9. As to expression, detected in epidermis and liver (at protein level). Widely expressed, with highest levels in liver and kidney.

It is found in the cell junction. Its subcellular location is the tight junction. The protein resides in the cell membrane. It localises to the basolateral cell membrane. Claudins function as major constituents of the tight junction complexes that regulate the permeability of epithelia. While some claudin family members play essential roles in the formation of impermeable barriers, others mediate the permeability to ions and small molecules. Often, several claudin family members are coexpressed and interact with each other, and this determines the overall permeability. CLDN1 is required to prevent the paracellular diffusion of small molecules through tight junctions in the epidermis and is required for the normal barrier function of the skin. Required for normal water homeostasis and to prevent excessive water loss through the skin, probably via an indirect effect on the expression levels of other proteins, since CLDN1 itself seems to be dispensable for water barrier formation in keratinocyte tight junctions. This is Claudin-1 (Cldn1) from Mus musculus (Mouse).